The following is a 257-amino-acid chain: Leucine-rich repeat-containing protein 3 (257 aa).

Residues 1–32 form the signal peptide; it reads MGPRGRQSPSATLAPSQGSCFFILFCLRLGAS. In terms of domain architecture, LRRNT spans 33-64; that stretch reads CPQACQCPDHAGAVAVHCSSRGLQEIPRDIPA. LRR repeat units follow at residues 65 to 86, 89 to 110, and 114 to 135; these read DTVL…AFQH, QLRE…AFSG, and GLRL…ALGK. The LRRCT domain occupies 145 to 198; that stretch reads NPLHCECALQEALWELKLDPDSVDEIACHTSAQEQFVGKPLIQVLDSGASFCST. The helical transmembrane segment at 205–225 threads the bilayer; that stretch reads VAMLVTMFGWFTMVIAYVVYY.

Belongs to the LRRC3 family.

The protein localises to the membrane. This Mus musculus (Mouse) protein is Leucine-rich repeat-containing protein 3 (Lrrc3).